Reading from the N-terminus, the 376-residue chain is MSCSNVTMLVSSKPSLPDASNLSFRSAFNPFQLPSQNSSSSCTPSRPTSIQCGLKDLKNRIDSVKNTQKITEAMKLVAAAKVRRAQEAVVNGRPFSETLVEVLYSINEQLQTDDIESPLTKLRPVKKVALVVCTGDRGLCGGFNNAILKKAEARIAELKELGLEYTVVSVGRKGNSYFNRRPYIPVDRFLEGGSLPTAKEAQTIADDVFSLFVSEEVDKVELLYTKFVSLVKSNPIIHTLLPLSPKGEICDINGNCVDAAEDELFRLTTKEGKLTVERDVIRSKTVDFSPILQFEQDPVQILDALLPLYLNSQILRPLQESLASELAARMSAMSSAFDNASELKTDLTRVYNRATQAKITGEILEIVAGDIECIIW.

A chloroplast-targeting transit peptide spans 1–52 (MSCSNVTMLVSSKPSLPDASNLSFRSAFNPFQLPSQNSSSSCTPSRPTSIQC). The active site involves Cys133. Cys250 and Cys256 are disulfide-bonded.

Belongs to the ATPase gamma chain family. F-type ATPases have 2 components, CF(1) - the catalytic core - and CF(0) - the membrane proton channel. CF(1) has five subunits: alpha(3), beta(3), gamma(1), delta(1), epsilon(1). CF(0) has four main subunits: a, b, b' and c.

It localises to the plastid. Its subcellular location is the chloroplast thylakoid membrane. Produces ATP from ADP in the presence of a proton gradient across the membrane. The gamma chain is believed to be important in regulating ATPase activity and the flow of protons through the CF(0) complex. This chain is ATP synthase gamma chain, chloroplastic (ATPC), found in Pisum sativum (Garden pea).